The chain runs to 500 residues: Neuronal pentraxin receptor (500 aa).

At 1–2 the chain is on the cytoplasmic side; sequence MK. The chain crosses the membrane as a helical; Signal-anchor for type II membrane protein span at residues 3 to 23; it reads FLAVLLAAGMLAFLGAVICII. At 24-500 the chain is on the extracellular side; it reads ASVPLAASPA…FDVCKGRAKA (477 aa). An N-linked (GlcNAc...) asparagine glycan is attached at Asn-42. Low complexity predominate over residues 42 to 63; it reads NASVASGAAASPGPQRSLSALH. Disordered regions lie at residues 42-81 and 162-183; these read NASV…PAAS and ESGL…ADGP. Asn-216 is a glycosylation site (N-linked (GlcNAc...) asparagine). The Pentraxin (PTX) domain maps to 292–494; the sequence is DAFKISIPIR…GATKAAFDVC (203 aa). A disulfide bond links Cys-322 and Cys-383. Residues Asn-347, Glu-425, Gln-426, Asp-427, and Gln-437 each coordinate Ca(2+). N-linked (GlcNAc...) asparagine glycosylation is present at Asn-463.

As to quaternary structure, heteropentamer with NPTX1 and/or NPTX2. Also binds taipoxin-associated calcium-binding protein 49 (TCBP49/RCN2). Interacts with KLHL2. Requires Ca(2+) as cofactor. Post-translationally, ubiquitinated by a cullin-RING-based BCR (BTB-CUL3-RBX1) E3 ubiquitin-protein ligase complex containing KLHL2.

It localises to the membrane. May be involved in mediating uptake of synaptic material during synapse remodeling or in mediating the synaptic clustering of AMPA glutamate receptors at a subset of excitatory synapses. The sequence is that of Neuronal pentraxin receptor (NPTXR) from Homo sapiens (Human).